A 46-amino-acid polypeptide reads, in one-letter code: Light-harvesting protein B-800/850 beta 2 chain (46 aa).

At 2–25 (AERSLSGLTEEEAVAVHAQFQTTF) the chain is on the cytoplasmic side. Residues histidine 18 and histidine 36 each coordinate a bacteriochlorophyll. The chain crosses the membrane as a helical span at residues 26–46 (SAFIVLAAVAHVLVWVWKPWF).

This sequence belongs to the antenna complex beta subunit family. The core complex is formed by different alpha and beta chains, binding bacteriochlorophyll molecules, and arranged most probably in tetrameric structures disposed around the reaction center.

It localises to the cell inner membrane. Functionally, antenna complexes are light-harvesting systems, which transfer the excitation energy to the reaction centers. The protein is Light-harvesting protein B-800/850 beta 2 chain (B2) of Magnetospirillum molischianum (Rhodospirillum molischianum).